The primary structure comprises 369 residues: Flagellar P-ring protein (369 aa).

Residues 1–23 (MRSLLRWMGVLLLCGLCAAPAQA) form the signal peptide.

It belongs to the FlgI family. The basal body constitutes a major portion of the flagellar organelle and consists of four rings (L,P,S, and M) mounted on a central rod.

The protein localises to the periplasm. It localises to the bacterial flagellum basal body. Assembles around the rod to form the L-ring and probably protects the motor/basal body from shearing forces during rotation. This chain is Flagellar P-ring protein, found in Chromohalobacter salexigens (strain ATCC BAA-138 / DSM 3043 / CIP 106854 / NCIMB 13768 / 1H11).